Consider the following 341-residue polypeptide: SGVAKFAKYPLTFGPSPISNLNRLSQHLGSKVNVYAKREDCNSGLAFGGNKLRKLEYIVPDIVEGDYTHLVSIGGRQSNQTRMVAALAAKLGKKCVLIQEDWVPIPEAEKDVYNRVGNIELSRIMGADVRVIEDGFDIGMRKSFANALQELEDAGHKPYPIPAGCSEHKYGGLGFVGFADEVINQEVELGIKFDKIVVCCVTGSTTAGILAGMAQYGRQDDVIAIDASFTSEKTKEQTLRIANNTAKLIGVEHEFKDFTLDTRFAYPCYGVPNEGTIEAIRTCAEQEGVLTDPVYEGKSMQGLIALIKEDYFKPGANVLYVHLGGAPALSAYSSFFPTKTA.

Ser1 is subject to N-acetylserine. Lys51 is modified (N6-(pyridoxal phosphate)lysine). Ser78 functions as the Nucleophile in the catalytic mechanism.

This sequence belongs to the ACC deaminase/D-cysteine desulfhydrase family. As to quaternary structure, homodimer. Requires pyridoxal 5'-phosphate as cofactor.

The enzyme catalyses 1-aminocyclopropane-1-carboxylate + H2O = 2-oxobutanoate + NH4(+). Functionally, catalyzes a cyclopropane ring-opening reaction, the irreversible conversion of 1-aminocyclopropane-1-carboxylate (ACC) to ammonia and alpha-ketobutyrate. The protein is 1-aminocyclopropane-1-carboxylate deaminase of Cyberlindnera saturnus (Yeast).